Consider the following 151-residue polypeptide: Large ribosomal subunit protein bL9 (151 aa).

The protein belongs to the bacterial ribosomal protein bL9 family.

Binds to the 23S rRNA. This is Large ribosomal subunit protein bL9 from Lactobacillus helveticus (strain DPC 4571).